The chain runs to 651 residues: Acetyl-coenzyme A synthetase (651 aa).

Residues 189 to 192, Thr-311, and Asn-335 each bind CoA; that span reads RGGK. Residues 387-389, 411-416, Asp-500, and Arg-515 each bind ATP; these read GEP and DTWWQT. Ser-523 is a binding site for CoA. Arg-526 serves as a coordination point for ATP. Mg(2+)-binding residues include Val-537, His-539, and Val-542. Arg-586 provides a ligand contact to CoA. Lys-611 is modified (N6-acetyllysine).

This sequence belongs to the ATP-dependent AMP-binding enzyme family. Mg(2+) serves as cofactor. Post-translationally, acetylated. Deacetylation by the SIR2-homolog deacetylase activates the enzyme.

The catalysed reaction is acetate + ATP + CoA = acetyl-CoA + AMP + diphosphate. Its function is as follows. Catalyzes the conversion of acetate into acetyl-CoA (AcCoA), an essential intermediate at the junction of anabolic and catabolic pathways. AcsA undergoes a two-step reaction. In the first half reaction, AcsA combines acetate with ATP to form acetyl-adenylate (AcAMP) intermediate. In the second half reaction, it can then transfer the acetyl group from AcAMP to the sulfhydryl group of CoA, forming the product AcCoA. This Brucella melitensis biotype 2 (strain ATCC 23457) protein is Acetyl-coenzyme A synthetase.